An 81-amino-acid polypeptide reads, in one-letter code: Sulfur carrier protein TusA (81 aa).

The Cysteine persulfide intermediate role is filled by Cys-19.

This sequence belongs to the sulfur carrier protein TusA family.

The protein resides in the cytoplasm. Sulfur carrier protein which probably makes part of a sulfur-relay system. The sequence is that of Sulfur carrier protein TusA from Shewanella denitrificans (strain OS217 / ATCC BAA-1090 / DSM 15013).